A 935-amino-acid polypeptide reads, in one-letter code: Epstein-Barr nuclear antigen 3 (935 aa).

5 disordered regions span residues 1 to 89 (MDKD…DLPG), 342 to 373 (HVEG…VSRG), 399 to 446 (TEQG…VPEP), 611 to 634 (KQAS…MEGP), and 883 to 908 (HGRP…DHEP). A compositionally biased stretch (acidic residues) spans 10–19 (ALDDNMEEEV). Positions 20 to 29 (PSTSVVQEQV) are enriched in polar residues. The segment covering 352–366 (EESEDTESDGDDEDL) has biased composition (acidic residues). Over residues 399–410 (TEQGKEVLEKAR) the composition is skewed to basic and acidic residues. The segment covering 431-440 (SDETATSHGS) has biased composition (polar residues). The span at 615–630 (VEVQPPQVTQVSPQQP) shows a compositional bias: low complexity.

Belongs to the herpesviridae EBNA-3 family. Interacts with human UCKL1. Interacts with host CTPB1; this interaction seems important for EBNA3-mediated transcriptional repression. Interacts with host RBPJ. Interacts with host USP12 and WDR48; these interactions form a deubiquitination-competent complex.

The protein resides in the host nucleus matrix. Plays an essential role for activation and immortalization of human B-cells. Represses transcription of viral promoters TP1 and Cp through interaction with host RBPJ, and inhibits EBNA2-mediated activation of these promoters. Since Cp is the promoter for all EBNA mRNAs, EBNA3A probably contributes to a negative autoregulatory control loop. This is Epstein-Barr nuclear antigen 3 (EBNA3) from Homo sapiens (Human).